We begin with the raw amino-acid sequence, 64 residues long: Temporin-ALh (64 aa).

An N-terminal signal peptide occupies residues Met1–Cys22. The propeptide occupies Glu23–Arg46. Position 62 is a serine amide (Ser62).

This sequence belongs to the frog skin active peptide (FSAP) family. Temporin subfamily. In terms of tissue distribution, expressed by the skin glands.

The protein localises to the secreted. In terms of biological role, antimicrobial peptide with activity against Gram-positive and Gram-negative bacteria and against fungi. Has been tested against S.aureus (MIC=2.5 ug/mL), B.pumilus (MIC=7.5 ug/mL), B.cereus (MIC=75.0 ug/mL), E.coli (MIC=5.0 ug/mL), B.dysenteriae (MIC=20.0 ug/mL), A.cacoaceticus (MIC=60.0 ug/mL), P.aeruginosa (MIC=2.5 ug/mL) and C.albicans (MIC=2.5 ug/mL). Also shows a weak hemolytic activity. The protein is Temporin-ALh of Amolops loloensis (Lolokou Sucker Frog).